A 247-amino-acid chain; its full sequence is Carboxy-S-adenosyl-L-methionine synthase (247 aa).

S-adenosyl-L-methionine contacts are provided by residues Tyr-40, 65–67 (GCS), 90–91 (DN), 122–123 (DI), Asn-137, and Arg-204.

Belongs to the class I-like SAM-binding methyltransferase superfamily. Cx-SAM synthase family. Homodimer.

The enzyme catalyses prephenate + S-adenosyl-L-methionine = carboxy-S-adenosyl-L-methionine + 3-phenylpyruvate + H2O. Catalyzes the conversion of S-adenosyl-L-methionine (SAM) to carboxy-S-adenosyl-L-methionine (Cx-SAM). This Pseudomonas syringae pv. tomato (strain ATCC BAA-871 / DC3000) protein is Carboxy-S-adenosyl-L-methionine synthase.